The sequence spans 63 residues: Disintegrin schistatin-like subunit B (63 aa).

The Disintegrin domain occupies Asn1–Asn63. Intrachain disulfides connect Cys6/Cys29, Cys20/Cys26, Cys25/Cys50, and Cys38/Cys57. The Cell attachment site motif lies at Arg42 to Asp44.

The protein belongs to the disintegrin family. Dimeric disintegrin subfamily. Heterodimer with subunit A; disulfide-linked. As to expression, expressed by the venom gland.

The protein localises to the secreted. In terms of biological role, may bind to both alpha-IIb/beta-3 (ITGA2B/ITGB3) and alpha-V/beta-3 (ITGAV/ITGB3) integrins, and may inhibit platelet aggregation. The protein is Disintegrin schistatin-like subunit B of Echis carinatus (Saw-scaled viper).